The chain runs to 346 residues: MNILIIGPSWVGDMMMSHSLYQQLKIQYPNCNIDVMAPNWCKPLLARMPEVRKAIEMPLGHGAFELGTRYRLGKSLREQYDMAIVLPNSLKSAFIPFFAKIVHRRGWKGESRYILLNDLRANKKDYPMMVQRYVALAFEKDVIPKADDIPVLKPYLTVEPAQQAETLKKFEKQTALLGERPIIGFCPGAEFGPAKRWPHYHYAKLAEMLITQGYAVALFGSAKDEPVGEEIRQALPEELREFCVNLAGKTNLNEAVDLIANCTAVVTNDSGLMHIAAAVNRPLIALYGPTSPQYTPPLSDKATIIRLIEGELIKVRKGDKEGGYHQSLIDITPEMALEKLNELLAK.

This sequence belongs to the glycosyltransferase 9 family.

The catalysed reaction is an L-alpha-D-Hep-(1-&gt;5)-[alpha-Kdo-(2-&gt;4)]-alpha-Kdo-(2-&gt;6)-lipid A + ADP-L-glycero-beta-D-manno-heptose = an L-alpha-D-Hep-(1-&gt;3)-L-alpha-D-Hep-(1-&gt;5)-[alpha-Kdo-(2-&gt;4)]-alpha-Kdo-(2-&gt;6)-lipid A + ADP + H(+). It functions in the pathway bacterial outer membrane biogenesis; LOS core biosynthesis. Functionally, glycosyltransferase involved in the biosynthesis of the core oligosaccharide region of lipooligosaccharide (LOS). Catalyzes the addition of a heptose unit to the heptosyl-Kdo2-lipid A module. This chain is Lipooligosaccharide heptosyltransferase 2 (waaF), found in Haemophilus influenzae (strain ATCC 51907 / DSM 11121 / KW20 / Rd).